A 359-amino-acid chain; its full sequence is RNA 3'-terminal phosphate cyclase (359 aa).

Residues glutamine 100 and 291–294 (HASD) each bind ATP. Histidine 317 acts as the Tele-AMP-histidine intermediate in catalysis.

It belongs to the RNA 3'-terminal cyclase family. Type 1 subfamily.

The protein resides in the cytoplasm. It carries out the reaction a 3'-end 3'-phospho-ribonucleotide-RNA + ATP = a 3'-end 2',3'-cyclophospho-ribonucleotide-RNA + AMP + diphosphate. Its function is as follows. Catalyzes the conversion of 3'-phosphate to a 2',3'-cyclic phosphodiester at the end of RNA. The mechanism of action of the enzyme occurs in 3 steps: (A) adenylation of the enzyme by ATP; (B) transfer of adenylate to an RNA-N3'P to produce RNA-N3'PP5'A; (C) and attack of the adjacent 2'-hydroxyl on the 3'-phosphorus in the diester linkage to produce the cyclic end product. The biological role of this enzyme is unknown but it is likely to function in some aspects of cellular RNA processing. In Hyperthermus butylicus (strain DSM 5456 / JCM 9403 / PLM1-5), this protein is RNA 3'-terminal phosphate cyclase.